The sequence spans 1305 residues: Serine protease EspC (1305 aa).

A signal peptide spans 1-53 (MNKIYALKYCHATGGLIAVSELASRVMKKAARGSLLALFNLSLYGAFLSASQA). In terms of domain architecture, Peptidase S6 spans 55–297 (QLNIDNVWAR…SILNQYDENT (243 aa)). Active-site charge relay system residues include His125, Asp153, and Ser256. Residues 1039–1305 (DTQGDAGVWA…AINANFRYSF (267 aa)) form the Autotransporter domain.

Post-translationally, cleaved to release the mature protein from the outer membrane.

Its subcellular location is the periplasm. The protein localises to the secreted. It is found in the cell surface. The protein resides in the cell outer membrane. With respect to regulation, inhibition of cytotoxic activity by phenylmethylsulfonyl fluoride. Its function is as follows. Serine protease with enterotoxic and cytotoxic activities. Cleaves fodrin, but does not cause its redistribution within epithelial cells. The exact role of EspC in EPEC pathogenesis is still unknown. This chain is Serine protease EspC (espC), found in Escherichia coli O127:H6 (strain E2348/69 / EPEC).